Reading from the N-terminus, the 357-residue chain is Glutamine synthetase root isozyme B (357 aa).

A GS beta-grasp domain is found at 19–99 (IIAEYIWVGG…VICDVYTPAG (81 aa)). The region spanning 106–357 (KRYNAAKIFS…AETTILWKKS (252 aa)) is the GS catalytic domain.

The protein belongs to the glutamine synthetase family. Homooctamer.

The protein localises to the cytoplasm. The catalysed reaction is L-glutamate + NH4(+) + ATP = L-glutamine + ADP + phosphate + H(+). The polypeptide is Glutamine synthetase root isozyme B (GS3B) (Pisum sativum (Garden pea)).